The primary structure comprises 405 residues: Tryptophan synthase beta chain (405 aa).

Lysine 98 carries the N6-(pyridoxal phosphate)lysine modification.

This sequence belongs to the TrpB family. As to quaternary structure, tetramer of two alpha and two beta chains. Pyridoxal 5'-phosphate is required as a cofactor.

It carries out the reaction (1S,2R)-1-C-(indol-3-yl)glycerol 3-phosphate + L-serine = D-glyceraldehyde 3-phosphate + L-tryptophan + H2O. The protein operates within amino-acid biosynthesis; L-tryptophan biosynthesis; L-tryptophan from chorismate: step 5/5. In terms of biological role, the beta subunit is responsible for the synthesis of L-tryptophan from indole and L-serine. This is Tryptophan synthase beta chain from Xanthomonas oryzae pv. oryzae (strain MAFF 311018).